Consider the following 116-residue polypeptide: Large ribosomal subunit protein uL24 (116 aa).

This sequence belongs to the universal ribosomal protein uL24 family. As to quaternary structure, part of the 50S ribosomal subunit.

Its function is as follows. One of two assembly initiator proteins, it binds directly to the 5'-end of the 23S rRNA, where it nucleates assembly of the 50S subunit. In terms of biological role, located at the polypeptide exit tunnel on the outside of the subunit. This Methanosarcina barkeri (strain Fusaro / DSM 804) protein is Large ribosomal subunit protein uL24.